The chain runs to 323 residues: Down-regulator of invasive growth 2 (323 aa).

Acidic residues predominate over residues 1–10 (MNKEEQEDPQ). The disordered stretch occupies residues 1 to 26 (MNKEEQEDPQQEQISTVQENDPRNLQ). The segment covering 11-26 (QEQISTVQENDPRNLQ) has biased composition (polar residues). Residue serine 34 is modified to Phosphoserine. The tract at residues 67–87 (LSQKEEDHSGKPPTITTSPAE) is disordered. Phosphoserine is present on residues serine 225, serine 266, and serine 270.

In terms of assembly, forms a complex with DIG1, STE12 and either FUS3 or KSS1. The interaction of FUS3 with STE12 depends on the presence of both DIG1 and DIG2. STE12 is lost from FUS3/DIG1/DIG2 complex after pheromone treatment. DIG1 and DIG2 have also been reported to interact with CLN1 and CLN2. Phosphorylated by FUS3 and KSS1, in a pheromone-stimulated manner.

It is found in the nucleus. Functionally, DIG2 and DIG1 are negative regulators of the filamentation and pheromone induced mating program. DIG1 and DIG2 inhibit the transcriptional activity of STE12 by direct protein-protein interaction. DIG2 binds to the DNA binding domain (DBD) of STE12 and thus inhibits transcription when overexpressed. The protein is Down-regulator of invasive growth 2 (DIG2) of Saccharomyces cerevisiae (strain ATCC 204508 / S288c) (Baker's yeast).